The chain runs to 241 residues: Small ribosomal subunit protein uS2 (241 aa).

Belongs to the universal ribosomal protein uS2 family.

The chain is Small ribosomal subunit protein uS2 from Escherichia coli (strain 55989 / EAEC).